Consider the following 107-residue polypeptide: U1-lycotoxin-Ls1i (107 aa).

An N-terminal signal peptide occupies residues 1–20 (MMKVLVVVALLVTLISYSSS). Positions 21–41 (EGIDDLEADELLSLMANEQTR) are excised as a propeptide. Intrachain disulfides connect cysteine 44–cysteine 59, cysteine 51–cysteine 68, cysteine 58–cysteine 86, and cysteine 70–cysteine 84.

This sequence belongs to the neurotoxin 19 (CSTX) family. 04 (U1-Lctx) subfamily. As to expression, expressed by the venom gland.

Its subcellular location is the secreted. The chain is U1-lycotoxin-Ls1i from Lycosa singoriensis (Wolf spider).